The sequence spans 356 residues: MEMGFRWYGSQNDQIHLADIRQIPGVRQVVGALFDIPVGEVWPEDQIIRLKHQIEAAGLKFTVVESVNIHDDIKIGLPSRDRYIENYQQTIRNLAAAGVRTICYNFMPIFDWVRTNLHFSLADGSQALAFEHRQVQRQPQDIIHEIENNANGFVLPGWEPERLAQVQQLFDAYAGVDETQLAANLNYFLDAIIPVCEECHVQMALHPDDPPRELFGLPRIYKNLADMNRIVAMNPSTANGFTICTGSLGENPQNDVPAIIREFVPQGRVPFVHARNIKFMSDQGDFHESAHLSSMGSLDMFAIMQALHETGFSGVIRPDHGRDIWHESGRPGYGLYDRALGITYLNGLWEALEKQA.

It belongs to the mannonate dehydratase family. Requires Fe(2+) as cofactor. Mn(2+) is required as a cofactor.

It catalyses the reaction D-mannonate = 2-dehydro-3-deoxy-D-gluconate + H2O. The protein operates within carbohydrate metabolism; pentose and glucuronate interconversion. In terms of biological role, catalyzes the dehydration of D-mannonate. The chain is Mannonate dehydratase from Levilactobacillus brevis (strain ATCC 367 / BCRC 12310 / CIP 105137 / JCM 1170 / LMG 11437 / NCIMB 947 / NCTC 947) (Lactobacillus brevis).